Here is a 413-residue protein sequence, read N- to C-terminus: GTPase HflX (413 aa).

The 187-residue stretch at 200–386 (VRVALVGYTN…KVYETVREIH (187 aa)) folds into the Hflx-type G domain. GTP is bound by residues 206 to 213 (GYTNVGKS), 231 to 235 (FATLD), 252 to 255 (DTVG), 318 to 321 (NKID), and 364 to 366 (SAT). Residues serine 213 and threonine 233 each coordinate Mg(2+).

The protein belongs to the TRAFAC class OBG-HflX-like GTPase superfamily. HflX GTPase family. Monomer. Associates with the 50S ribosomal subunit. The cofactor is Mg(2+).

The protein localises to the cytoplasm. Functionally, GTPase that associates with the 50S ribosomal subunit and may have a role during protein synthesis or ribosome biogenesis. In Flavobacterium psychrophilum (strain ATCC 49511 / DSM 21280 / CIP 103535 / JIP02/86), this protein is GTPase HflX.